Here is a 2063-residue protein sequence, read N- to C-terminus: Rho guanine nucleotide exchange factor 17 (2063 aa).

Disordered stretches follow at residues 22–365, 380–466, 485–581, and 602–958; these read WSGG…MSDS, YLAS…SNPD, LRVR…AEED, and IQRM…RHVR. Residues 65-76 show a composition bias toward low complexity; sequence PLAAPAQPRPLR. The segment covering 87–96 has biased composition (basic and acidic residues); the sequence is RRFDAPRLDD. A compositionally biased stretch (low complexity) spans 108–122; it reads PAAAEEAAEGPARGA. Residues serine 142 and serine 152 each carry the phosphoserine modification. Over residues 225–250 the composition is skewed to low complexity; that stretch reads AGARASCSSSSIAASYPVSRSRAASS. Serine 310 bears the Phosphoserine mark. Positions 313-323 are enriched in polar residues; the sequence is LNLSSMNSAGV. Serine 326, serine 332, serine 383, serine 387, serine 395, serine 410, and serine 420 each carry phosphoserine. Residues 388 to 397 are compositionally biased toward polar residues; sequence RGSSRYSSTE. The span at 445–456 shows a compositional bias: basic and acidic residues; the sequence is ALRDGGFEPEKS. Phosphoserine is present on residues serine 461 and serine 546. Residues 562-573 are compositionally biased toward low complexity; that stretch reads SALKSSSSELLL. A Phosphoserine modification is found at serine 619. Polar residues predominate over residues 671-680; it reads LSSSSAQTNH. Phosphoserine is present on serine 696. Threonine 699 and threonine 702 each carry phosphothreonine. Phosphoserine is present on serine 735. The segment covering 754-765 has biased composition (polar residues); that stretch reads SVDSNLLGSLSP. Residues 827 to 836 show a composition bias toward basic and acidic residues; that stretch reads SLSDPSRRGE. Phosphoserine is present on serine 914. The span at 917-928 shows a compositional bias: basic residues; that stretch reads LIRRGSKKRPAR. Residues 930–939 are compositionally biased toward basic and acidic residues; the sequence is SHQELRRDEG. A phosphoserine mark is found at serine 961 and serine 1002. The disordered stretch occupies residues 1034–1060; the sequence is APPSAEAKPPEAARPADEPTPASKCCS. Residues 1041-1050 are compositionally biased toward basic and acidic residues; the sequence is KPPEAARPAD. A DH domain is found at 1066-1254; that stretch reads MRKHVAMTLL…KQVAERINKG (189 aa). Residue serine 1331 is modified to Phosphoserine. Disordered stretches follow at residues 1564–1584, 1616–1719, 1991–2020, and 2036–2055; these read HREP…PAGP, GLEM…SSHG, TPPP…PAPA, and FRLS…DDST. The segment covering 1568–1582 has biased composition (pro residues); sequence PPSLRSPPETAPEPA. The span at 1644 to 1680 shows a compositional bias: low complexity; the sequence is SPSPSGTLQSQASRSTISSSFGNEETPSSKEATAETT. Basic and acidic residues predominate over residues 2004-2013; that stretch reads PSLEHRDSPW.

Highly expressed in the heart.

Acts as a guanine nucleotide exchange factor (GEF) for RhoA GTPases. In Homo sapiens (Human), this protein is Rho guanine nucleotide exchange factor 17 (ARHGEF17).